We begin with the raw amino-acid sequence, 294 residues long: MINGSIVALITPMNSDGSVDFASLERLVEFHIDQGTDAIVAVGTTGESATLPMNEHVTVVAQTVKFAAGRIPVIGGNGANATSEAIELTKSLSKVGVAAMLGVTPYYNKPTPKGLVAHYKAVAASTDIPQILYNVPGRTAVDMKPETVAELVAVSNIIGVKEATGDVSRVQRLRELCGNDFMLYSGDDATAREFLLLGGNGVISVANNIVPKAFKAMCDAALAGNAELAASIDEPLRGLYSTLFCEANPIPVKWAAHRMGLIECGHIRLPLTELSEQCHGLLLDAMTRAQIEVK.

A pyruvate-binding site is contributed by threonine 45. The active-site Proton donor/acceptor is the tyrosine 133. Residue lysine 161 is the Schiff-base intermediate with substrate of the active site. A pyruvate-binding site is contributed by isoleucine 203.

The protein belongs to the DapA family. Homotetramer; dimer of dimers.

It is found in the cytoplasm. The catalysed reaction is L-aspartate 4-semialdehyde + pyruvate = (2S,4S)-4-hydroxy-2,3,4,5-tetrahydrodipicolinate + H2O + H(+). It participates in amino-acid biosynthesis; L-lysine biosynthesis via DAP pathway; (S)-tetrahydrodipicolinate from L-aspartate: step 3/4. In terms of biological role, catalyzes the condensation of (S)-aspartate-beta-semialdehyde [(S)-ASA] and pyruvate to 4-hydroxy-tetrahydrodipicolinate (HTPA). The protein is 4-hydroxy-tetrahydrodipicolinate synthase of Shewanella sp. (strain ANA-3).